The following is a 257-amino-acid chain: 3-alpha-hydroxysteroid dehydrogenase/carbonyl reductase (257 aa).

NAD(+) contacts are provided by residues 8-13, D32, 41-42, and G71; these read GCATGI and DL. S114 serves as a coordination point for substrate. The NAD(+) site is built by Y155 and K159. The active-site Proton acceptor is the Y155.

This sequence belongs to the short-chain dehydrogenases/reductases (SDR) family. Homodimer.

The protein resides in the cytoplasm. It carries out the reaction a 3alpha-hydroxysteroid + NADP(+) = a 3-oxosteroid + NADPH + H(+). It catalyses the reaction a 3alpha-hydroxysteroid + NAD(+) = a 3-oxosteroid + NADH + H(+). In terms of biological role, catalyzes the reversible interconversion of hydroxy and oxo groups at position 3 of the steroid nucleus. Along with the 3 alpha-hydroxysteroid dehydrogenase and 3-oxo-reductase activities towards a variety of cis or trans fused A/B ring steroids, it also reduces several xenobiotic carbonyl compounds, including a metyrapone-based class of insecticides, to the respective alcohol metabolites. No detectable activity on testosterone, progesterone or 3-oxo-desogestrel. The sequence is that of 3-alpha-hydroxysteroid dehydrogenase/carbonyl reductase (hsdA) from Comamonas testosteroni (Pseudomonas testosteroni).